A 510-amino-acid polypeptide reads, in one-letter code: ATP synthase subunit alpha (510 aa).

ATP is bound at residue 170-177 (GDRQTGKT).

Belongs to the ATPase alpha/beta chains family. As to quaternary structure, F-type ATPases have 2 components, CF(1) - the catalytic core - and CF(0) - the membrane proton channel. CF(1) has five subunits: alpha(3), beta(3), gamma(1), delta(1), epsilon(1). CF(0) has three main subunits: a(1), b(2) and c(9-12). The alpha and beta chains form an alternating ring which encloses part of the gamma chain. CF(1) is attached to CF(0) by a central stalk formed by the gamma and epsilon chains, while a peripheral stalk is formed by the delta and b chains.

The protein resides in the cell inner membrane. The enzyme catalyses ATP + H2O + 4 H(+)(in) = ADP + phosphate + 5 H(+)(out). Produces ATP from ADP in the presence of a proton gradient across the membrane. The alpha chain is a regulatory subunit. In Caulobacter vibrioides (strain ATCC 19089 / CIP 103742 / CB 15) (Caulobacter crescentus), this protein is ATP synthase subunit alpha.